The chain runs to 325 residues: DNA-directed RNA polymerase subunit alpha (325 aa).

An alpha N-terminal domain (alpha-NTD) region spans residues 1 to 231 (MQTSLLKPKI…DQLSVFAALE (231 aa)). An alpha C-terminal domain (alpha-CTD) region spans residues 246–325 (IDPILLRPVD…ENWPPAGLDK (80 aa)).

It belongs to the RNA polymerase alpha chain family. Homodimer. The RNAP catalytic core consists of 2 alpha, 1 beta, 1 beta' and 1 omega subunit. When a sigma factor is associated with the core the holoenzyme is formed, which can initiate transcription.

It catalyses the reaction RNA(n) + a ribonucleoside 5'-triphosphate = RNA(n+1) + diphosphate. Its function is as follows. DNA-dependent RNA polymerase catalyzes the transcription of DNA into RNA using the four ribonucleoside triphosphates as substrates. This chain is DNA-directed RNA polymerase subunit alpha, found in Burkholderia orbicola (strain MC0-3).